The primary structure comprises 371 residues: Envelope glycoprotein M (371 aa).

Residues 1–13 (MAPSHVDKVNTRT) lie on the Intravirion side of the membrane. The helical transmembrane segment at 14 to 34 (WSASIVFMVLTFVNVSVHLVL) threads the bilayer. Over 35 to 79 (SNFPHLGYPCVYYHVVDFERLNMSAYNVMHLHTPMLFLDSVQLVC) the chain is Virion surface. The chain crosses the membrane as a helical span at residues 80–100 (YAVFMQLVFLAVTIYYLVCWI). The Intravirion segment spans residues 101-126 (KISMRKDKGMSLNQSTRDISYMGDSL). A helical membrane pass occupies residues 127–147 (TAFLFILSMDTFQLFTLTMSF). Over 148–151 (RLPS) the chain is Virion surface. The chain crosses the membrane as a helical span at residues 152-172 (MIAFMAAVHFFCLTIFNVSMV). The Intravirion portion of the chain corresponds to 173–200 (TQYRSYKRSLFFFSRLHPKLKGTVQFRT). A helical membrane pass occupies residues 201-221 (LIVNLVEVALGFNTTVVAMAL). Over 222–239 (CYGFGNNFFVRTGHMVLA) the chain is Virion surface. The helical transmembrane segment at 240-260 (VFVVYAIISIIYFLLIEAVFF) threads the bilayer. Residues 261–264 (QYVK) are Intravirion-facing. A helical membrane pass occupies residues 265–285 (VQFGYHLGAFFGLCGLIYPIV). Residues 286-298 (QYDTFLSNEYRTG) are Virion surface-facing. Residues 299-319 (ISWSFGMLFFIWAMFTTCRAV) form a helical membrane-spanning segment. At 320-371 (RYFRGRGSGSVKYQALATASGEEVAALSHHDSLESRRLREEEDDDDEDFEDA) the chain is on the intravirion side. Residues 346-371 (LSHHDSLESRRLREEEDDDDEDFEDA) form a disordered region. The segment covering 347–359 (SHHDSLESRRLRE) has biased composition (basic and acidic residues). Positions 360-371 (EEDDDDEDFEDA) are enriched in acidic residues.

Belongs to the herpesviridae glycoprotein M family. Interacts (via N-terminus) with gN (via N-terminus). The gM-gN heterodimer forms the gCII complex.

It localises to the virion membrane. Its subcellular location is the host Golgi apparatus. The protein resides in the host trans-Golgi network. It is found in the host endosome membrane. The protein localises to the host nucleus inner membrane. Its function is as follows. Envelope glycoprotein important for virion assembly and egress. Plays a role in the correct incorporation of gH-gL into virion membrane. Directs the glycoprotein N (gN) to the host trans-Golgi network. This is Envelope glycoprotein M from Homo sapiens (Human).